A 234-amino-acid chain; its full sequence is Ammonia monooxygenase gamma subunit (234 aa).

The N-terminal stretch at Met-1 to Ser-20 is a signal peptide. Residues Glu-38 to Met-193 form the Cytochrome c domain. Heme c contacts are provided by Cys-51, Cys-54, and His-55. A helical transmembrane segment spans residues Glu-206–Lys-226.

The protein belongs to the cytochrome c family. As to quaternary structure, the soluble ammonia monooxygenase is a nonamer composed of three alpha subunits (AmoA), three beta subunits (AmoB) and three gamma subunits (Cytochrome c1 PetC). Heme c is required as a cofactor.

It is found in the cell membrane. The protein resides in the cytoplasm. Its function is as follows. Part of the ammonia monooxygenase complex, which catalyzes the oxidation of ammonia to hydroxylamine, the first reaction in the process of ammonia oxidation to nitrite. The polypeptide is Ammonia monooxygenase gamma subunit (Nitrosomonas europaea (strain ATCC 19718 / CIP 103999 / KCTC 2705 / NBRC 14298)).